The following is a 217-amino-acid chain: Large ribosomal subunit protein uL1 (217 aa).

An N6,N6-dimethyllysine; alternate modification is found at K122. Residue K122 is modified to N6-methyllysine; alternate.

Belongs to the universal ribosomal protein uL1 family.

The protein is Large ribosomal subunit protein uL1 (rpl10a) of Dictyostelium discoideum (Social amoeba).